Consider the following 469-residue polypeptide: ATP synthase subunit beta (469 aa).

ATP is bound at residue 156–163 (GGAGVGKT).

The protein belongs to the ATPase alpha/beta chains family. F-type ATPases have 2 components, CF(1) - the catalytic core - and CF(0) - the membrane proton channel. CF(1) has five subunits: alpha(3), beta(3), gamma(1), delta(1), epsilon(1). CF(0) has three main subunits: a(1), b(2) and c(9-12). The alpha and beta chains form an alternating ring which encloses part of the gamma chain. CF(1) is attached to CF(0) by a central stalk formed by the gamma and epsilon chains, while a peripheral stalk is formed by the delta and b chains.

Its subcellular location is the cell membrane. It carries out the reaction ATP + H2O + 4 H(+)(in) = ADP + phosphate + 5 H(+)(out). Produces ATP from ADP in the presence of a proton gradient across the membrane. The catalytic sites are hosted primarily by the beta subunits. The sequence is that of ATP synthase subunit beta from Bacillus mycoides (strain KBAB4) (Bacillus weihenstephanensis).